The following is a 537-amino-acid chain: Probable feruloyl esterase ARB_07085 (537 aa).

Residues 1-22 form the signal peptide; it reads MVTLPLLLSILPLAAVFSSAAS. Residues asparagine 67, asparagine 76, and asparagine 189 are each glycosylated (N-linked (GlcNAc...) asparagine). Intrachain disulfides connect cysteine 196/cysteine 459, cysteine 263/cysteine 280, and cysteine 508/cysteine 529. The active-site Acyl-ester intermediate is serine 197. Ca(2+)-binding residues include aspartate 264, aspartate 267, valine 269, aspartate 271, and valine 273. Asparagine 339 is a glycosylation site (N-linked (GlcNAc...) asparagine). Active-site charge relay system residues include aspartate 419 and histidine 458.

Belongs to the tannase family.

Its subcellular location is the secreted. The enzyme catalyses feruloyl-polysaccharide + H2O = ferulate + polysaccharide.. Its function is as follows. Hydrolyzes the feruloyl-arabinose ester bond in arabinoxylans as well as the feruloyl-galactose and feruloyl-arabinose ester bonds. This chain is Probable feruloyl esterase ARB_07085, found in Arthroderma benhamiae (strain ATCC MYA-4681 / CBS 112371) (Trichophyton mentagrophytes).